Reading from the N-terminus, the 954-residue chain is Glycine dehydrogenase (decarboxylating) (954 aa).

An N6-(pyridoxal phosphate)lysine modification is found at Lys-700.

This sequence belongs to the GcvP family. The glycine cleavage system is composed of four proteins: P, T, L and H. Requires pyridoxal 5'-phosphate as cofactor.

The enzyme catalyses N(6)-[(R)-lipoyl]-L-lysyl-[glycine-cleavage complex H protein] + glycine + H(+) = N(6)-[(R)-S(8)-aminomethyldihydrolipoyl]-L-lysyl-[glycine-cleavage complex H protein] + CO2. The glycine cleavage system catalyzes the degradation of glycine. The P protein binds the alpha-amino group of glycine through its pyridoxal phosphate cofactor; CO(2) is released and the remaining methylamine moiety is then transferred to the lipoamide cofactor of the H protein. The chain is Glycine dehydrogenase (decarboxylating) from Dinoroseobacter shibae (strain DSM 16493 / NCIMB 14021 / DFL 12).